The sequence spans 436 residues: 3-ketoacyl-CoA thiolase (436 aa).

The active-site Acyl-thioester intermediate is the Cys99. Active-site proton acceptor residues include His392 and Cys422.

It belongs to the thiolase-like superfamily. Thiolase family. Heterotetramer of two alpha chains (FadJ) and two beta chains (FadI).

It localises to the cytoplasm. It catalyses the reaction an acyl-CoA + acetyl-CoA = a 3-oxoacyl-CoA + CoA. Its pathway is lipid metabolism; fatty acid beta-oxidation. In terms of biological role, catalyzes the final step of fatty acid oxidation in which acetyl-CoA is released and the CoA ester of a fatty acid two carbons shorter is formed. This is 3-ketoacyl-CoA thiolase from Citrobacter koseri (strain ATCC BAA-895 / CDC 4225-83 / SGSC4696).